The following is a 531-amino-acid chain: Transcription termination/antitermination protein NusA (531 aa).

The 71-residue stretch at 165-235 folds into the S1 motif domain; sequence GEVIEAKVED…SLWPITLSRS (71 aa). The 71-residue stretch at 340 to 410 folds into the KH domain; sequence DTSIEVVVPA…FGIKKRREKI (71 aa). Over residues 463-475 the composition is skewed to basic and acidic residues; sequence EKQVTPKEKEKVQ. A disordered region spans residues 463-531; the sequence is EKQVTPKEKE…KQTFDSFDDL (69 aa). Over residues 476-490 the composition is skewed to basic residues; it reads PKAKVHSNSHSKKPA. Residues 502–512 show a composition bias toward basic and acidic residues; it reads ASDKNLKKDQV. Positions 513–531 are enriched in polar residues; it reads DNNQTNPQTKQTFDSFDDL.

The protein belongs to the NusA family. As to quaternary structure, monomer. Binds directly to the core enzyme of the DNA-dependent RNA polymerase and to nascent RNA.

The protein resides in the cytoplasm. Participates in both transcription termination and antitermination. The polypeptide is Transcription termination/antitermination protein NusA (Mycoplasma genitalium (strain ATCC 33530 / DSM 19775 / NCTC 10195 / G37) (Mycoplasmoides genitalium)).